Here is a 410-residue protein sequence, read N- to C-terminus: Serine hydroxymethyltransferase (410 aa).

(6S)-5,6,7,8-tetrahydrofolate contacts are provided by residues Leu119 and 123–125 (GHL). Lys228 is modified (N6-(pyridoxal phosphate)lysine). Residue 351-353 (SPF) participates in (6S)-5,6,7,8-tetrahydrofolate binding.

Belongs to the SHMT family. Homodimer. It depends on pyridoxal 5'-phosphate as a cofactor.

It is found in the cytoplasm. The catalysed reaction is (6R)-5,10-methylene-5,6,7,8-tetrahydrofolate + glycine + H2O = (6S)-5,6,7,8-tetrahydrofolate + L-serine. It participates in one-carbon metabolism; tetrahydrofolate interconversion. Its pathway is amino-acid biosynthesis; glycine biosynthesis; glycine from L-serine: step 1/1. Its function is as follows. Catalyzes the reversible interconversion of serine and glycine with tetrahydrofolate (THF) serving as the one-carbon carrier. This reaction serves as the major source of one-carbon groups required for the biosynthesis of purines, thymidylate, methionine, and other important biomolecules. Also exhibits THF-independent aldolase activity toward beta-hydroxyamino acids, producing glycine and aldehydes, via a retro-aldol mechanism. This is Serine hydroxymethyltransferase from Alkaliphilus metalliredigens (strain QYMF).